The chain runs to 116 residues: Large ribosomal subunit protein bL19 (116 aa).

It belongs to the bacterial ribosomal protein bL19 family.

Its function is as follows. This protein is located at the 30S-50S ribosomal subunit interface and may play a role in the structure and function of the aminoacyl-tRNA binding site. The chain is Large ribosomal subunit protein bL19 from Stutzerimonas stutzeri (strain A1501) (Pseudomonas stutzeri).